The chain runs to 394 residues: Exodeoxyribonuclease 7 large subunit (394 aa).

This sequence belongs to the XseA family. As to quaternary structure, heterooligomer composed of large and small subunits.

It localises to the cytoplasm. It carries out the reaction Exonucleolytic cleavage in either 5'- to 3'- or 3'- to 5'-direction to yield nucleoside 5'-phosphates.. In terms of biological role, bidirectionally degrades single-stranded DNA into large acid-insoluble oligonucleotides, which are then degraded further into small acid-soluble oligonucleotides. This Thermotoga maritima (strain ATCC 43589 / DSM 3109 / JCM 10099 / NBRC 100826 / MSB8) protein is Exodeoxyribonuclease 7 large subunit.